A 278-amino-acid chain; its full sequence is Elongation factor Ts (278 aa).

The interval 80–83 (TDFV) is involved in Mg(2+) ion dislocation from EF-Tu.

The protein belongs to the EF-Ts family.

The protein resides in the cytoplasm. Functionally, associates with the EF-Tu.GDP complex and induces the exchange of GDP to GTP. It remains bound to the aminoacyl-tRNA.EF-Tu.GTP complex up to the GTP hydrolysis stage on the ribosome. In Micrococcus luteus (strain ATCC 4698 / DSM 20030 / JCM 1464 / CCM 169 / CCUG 5858 / IAM 1056 / NBRC 3333 / NCIMB 9278 / NCTC 2665 / VKM Ac-2230) (Micrococcus lysodeikticus), this protein is Elongation factor Ts.